The chain runs to 274 residues: 2,3,4,5-tetrahydropyridine-2,6-dicarboxylate N-succinyltransferase (274 aa).

Residues R104 and D141 each contribute to the substrate site.

Belongs to the transferase hexapeptide repeat family. As to quaternary structure, homotrimer.

It localises to the cytoplasm. The enzyme catalyses (S)-2,3,4,5-tetrahydrodipicolinate + succinyl-CoA + H2O = (S)-2-succinylamino-6-oxoheptanedioate + CoA. It functions in the pathway amino-acid biosynthesis; L-lysine biosynthesis via DAP pathway; LL-2,6-diaminopimelate from (S)-tetrahydrodipicolinate (succinylase route): step 1/3. This is 2,3,4,5-tetrahydropyridine-2,6-dicarboxylate N-succinyltransferase from Shewanella oneidensis (strain ATCC 700550 / JCM 31522 / CIP 106686 / LMG 19005 / NCIMB 14063 / MR-1).